The chain runs to 1021 residues: Putative 115 kDa protein in type-1 retrotransposable element R1DM (1021 aa).

The 263-residue stretch at 479-741 folds into the Reverse transcriptase domain; it reads RCIRLGYFPA…RSCRYLGITV (263 aa). The gag-like cysteine motif stretch occupies residues 955 to 971; sequence CACGDPYEDWMHILCAC.

This is Putative 115 kDa protein in type-1 retrotransposable element R1DM (R1A1-element\ORF2) from Drosophila melanogaster (Fruit fly).